The primary structure comprises 206 residues: Ribosomal RNA small subunit methyltransferase G (206 aa).

S-adenosyl-L-methionine contacts are provided by residues Gly73, Leu78, 124–125 (VE), and Arg139.

The protein belongs to the methyltransferase superfamily. RNA methyltransferase RsmG family.

Its subcellular location is the cytoplasm. The enzyme catalyses guanosine(527) in 16S rRNA + S-adenosyl-L-methionine = N(7)-methylguanosine(527) in 16S rRNA + S-adenosyl-L-homocysteine. Specifically methylates the N7 position of guanine in position 527 of 16S rRNA. The chain is Ribosomal RNA small subunit methyltransferase G from Photobacterium profundum (strain SS9).